We begin with the raw amino-acid sequence, 459 residues long: Cysteine--tRNA ligase (459 aa).

Residue Cys31 coordinates Zn(2+). Residues 33–43 carry the 'HIGH' region motif; it reads PTVYYNPHIGN. Cys216, His241, and Glu245 together coordinate Zn(2+). Residues 274–278 carry the 'KMSKS' region motif; sequence KMSKS. Lys277 provides a ligand contact to ATP.

It belongs to the class-I aminoacyl-tRNA synthetase family. Monomer. Requires Zn(2+) as cofactor.

The protein resides in the cytoplasm. The catalysed reaction is tRNA(Cys) + L-cysteine + ATP = L-cysteinyl-tRNA(Cys) + AMP + diphosphate. The polypeptide is Cysteine--tRNA ligase (Rickettsia peacockii (strain Rustic)).